Consider the following 167-residue polypeptide: Transmembrane protein 220 (167 aa).

The next 5 membrane-spanning stretches (helical) occupy residues 10–30 (PGLW…AAVV), 40–60 (WVVV…NPLV), 69–89 (VSAI…YHFL), 104–122 (ELSG…HSSS), and 130–150 (MHLA…VYVH).

It localises to the membrane. The chain is Transmembrane protein 220 (Tmem220) from Mus musculus (Mouse).